Here is a 206-residue protein sequence, read N- to C-terminus: Large ribosomal subunit protein uL4 (206 aa).

It belongs to the universal ribosomal protein uL4 family. As to quaternary structure, part of the 50S ribosomal subunit.

In terms of biological role, one of the primary rRNA binding proteins, this protein initially binds near the 5'-end of the 23S rRNA. It is important during the early stages of 50S assembly. It makes multiple contacts with different domains of the 23S rRNA in the assembled 50S subunit and ribosome. Its function is as follows. Forms part of the polypeptide exit tunnel. The chain is Large ribosomal subunit protein uL4 from Rhodopseudomonas palustris (strain BisA53).